The primary structure comprises 372 residues: Cytochrome b (372 aa).

4 consecutive transmembrane segments (helical) span residues 25 to 45 (FGSMLLTCLALQTMTGFFLAI), 69 to 90 (WMMQNLHAIGASMFFICIYIHI), 105 to 125 (WLSGTTLLIILMATAFFGYVL), and 170 to 190 (FFALHFILPFTIISMSSIHIM). Heme b contacts are provided by H75 and H89. Heme b contacts are provided by H174 and H188. An a ubiquinone-binding site is contributed by H193. Helical transmembrane passes span 218–238 (HKDMLMLTIMMTALFIIMSFN), 280–300 (LGGAVALVLSVTILMTMPFTH), 312–332 (LMQFMFWTLVTTFIMITWAAT), and 339–358 (FTTIGQVTSILYFTFFIMNP).

This sequence belongs to the cytochrome b family. In terms of assembly, the cytochrome bc1 complex contains 3 respiratory subunits (MT-CYB, CYC1 and UQCRFS1), 2 core proteins (UQCRC1 and UQCRC2) and probably 6 low-molecular weight proteins. Heme b is required as a cofactor.

The protein localises to the mitochondrion inner membrane. Its function is as follows. Component of the ubiquinol-cytochrome c reductase complex (complex III or cytochrome b-c1 complex) that is part of the mitochondrial respiratory chain. The b-c1 complex mediates electron transfer from ubiquinol to cytochrome c. Contributes to the generation of a proton gradient across the mitochondrial membrane that is then used for ATP synthesis. This chain is Cytochrome b (MT-CYB), found in Pantherophis bairdi (Baird's ratsnake).